The primary structure comprises 932 residues: UPF0182 protein Amet_0022 (932 aa).

The next 7 membrane-spanning stretches (helical) occupy residues 14 to 34 (VIIG…SEIL), 60 to 80 (LQIG…YLIG), 104 to 124 (ILIL…AGSL), 166 to 186 (TSIL…MFLI), 208 to 228 (LLQI…LVLA), 256 to 276 (VTLW…TGVV), and 286 to 306 (LLLI…VISL).

It belongs to the UPF0182 family.

The protein resides in the cell membrane. The chain is UPF0182 protein Amet_0022 from Alkaliphilus metalliredigens (strain QYMF).